The following is a 225-amino-acid chain: Phosphatidylserine decarboxylase proenzyme (225 aa).

The active-site Schiff-base intermediate with substrate; via pyruvic acid is the serine 195. Residue serine 195 is modified to Pyruvic acid (Ser); by autocatalysis.

It belongs to the phosphatidylserine decarboxylase family. PSD-A subfamily. Heterodimer of a large membrane-associated beta subunit and a small pyruvoyl-containing alpha subunit. Requires pyruvate as cofactor. Is synthesized initially as an inactive proenzyme. Formation of the active enzyme involves a self-maturation process in which the active site pyruvoyl group is generated from an internal serine residue via an autocatalytic post-translational modification. Two non-identical subunits are generated from the proenzyme in this reaction, and the pyruvate is formed at the N-terminus of the alpha chain, which is derived from the carboxyl end of the proenzyme. The post-translation cleavage follows an unusual pathway, termed non-hydrolytic serinolysis, in which the side chain hydroxyl group of the serine supplies its oxygen atom to form the C-terminus of the beta chain, while the remainder of the serine residue undergoes an oxidative deamination to produce ammonia and the pyruvoyl prosthetic group on the alpha chain.

It is found in the cell membrane. It catalyses the reaction a 1,2-diacyl-sn-glycero-3-phospho-L-serine + H(+) = a 1,2-diacyl-sn-glycero-3-phosphoethanolamine + CO2. The protein operates within phospholipid metabolism; phosphatidylethanolamine biosynthesis; phosphatidylethanolamine from CDP-diacylglycerol: step 2/2. Functionally, catalyzes the formation of phosphatidylethanolamine (PtdEtn) from phosphatidylserine (PtdSer). This Gluconobacter oxydans (strain 621H) (Gluconobacter suboxydans) protein is Phosphatidylserine decarboxylase proenzyme.